Reading from the N-terminus, the 378-residue chain is Ribosomal RNA large subunit methyltransferase G (378 aa).

This sequence belongs to the methyltransferase superfamily. RlmG family.

The protein resides in the cytoplasm. It carries out the reaction guanosine(1835) in 23S rRNA + S-adenosyl-L-methionine = N(2)-methylguanosine(1835) in 23S rRNA + S-adenosyl-L-homocysteine + H(+). In terms of biological role, specifically methylates the guanine in position 1835 (m2G1835) of 23S rRNA. This Escherichia coli O6:K15:H31 (strain 536 / UPEC) protein is Ribosomal RNA large subunit methyltransferase G.